Consider the following 215-residue polypeptide: Protein LURP-one-related 16 (215 aa).

A lipid anchor (N-myristoyl glycine) is attached at G2.

The protein belongs to the LOR family.

Its function is as follows. Might be related to the phospholipid scramblase and tubby-like superfamily of membrane tethered transcription factors. In Arabidopsis thaliana (Mouse-ear cress), this protein is Protein LURP-one-related 16.